Reading from the N-terminus, the 130-residue chain is Small ribosomal subunit protein uS11 (130 aa).

It belongs to the universal ribosomal protein uS11 family. In terms of assembly, part of the 30S ribosomal subunit. Interacts with proteins S7 and S18. Binds to IF-3.

Located on the platform of the 30S subunit, it bridges several disparate RNA helices of the 16S rRNA. Forms part of the Shine-Dalgarno cleft in the 70S ribosome. This chain is Small ribosomal subunit protein uS11, found in Pseudoalteromonas atlantica (strain T6c / ATCC BAA-1087).